The chain runs to 83 residues: Small ribosomal subunit protein bS16 (83 aa).

The protein belongs to the bacterial ribosomal protein bS16 family.

In Acinetobacter baumannii (strain AB307-0294), this protein is Small ribosomal subunit protein bS16.